A 211-amino-acid chain; its full sequence is MKKAILATKVGMTQIFNEDGVLTPVTVLQAGPCVVTQVKTVENDGYDAVQVGFADIREKLVNKPVKGHFDKAEVPYKRFLREFKFENASEYSVKDEIKADIFAAGDKVDATAISKGKGFQGAIKRLGQSRGPMAHGSKFHRHQGSNGSATTPGRVFKGKGMPGHMGSKRITIQNLEVVRVDVENNVILVKGAVPGPKKSLVTLKETVKAAK.

A disordered region spans residues 130–154; that stretch reads RGPMAHGSKFHRHQGSNGSATTPGR.

Belongs to the universal ribosomal protein uL3 family. In terms of assembly, part of the 50S ribosomal subunit. Forms a cluster with proteins L14 and L19.

In terms of biological role, one of the primary rRNA binding proteins, it binds directly near the 3'-end of the 23S rRNA, where it nucleates assembly of the 50S subunit. The sequence is that of Large ribosomal subunit protein uL3 from Lachnospira eligens (strain ATCC 27750 / DSM 3376 / VPI C15-48 / C15-B4) (Eubacterium eligens).